The primary structure comprises 476 residues: Probable periplasmic serine endoprotease DegP-like (476 aa).

The N-terminal stretch at 1 to 27 (MSIPRLKSYFTILATVLVLGQAVSAQA) is a signal peptide. Residues His116, Asp146, and Ser219 each act as charge relay system in the active site. Substrate contacts are provided by residues 217–219 (GNS) and 274–278 (LGVVI). 2 PDZ domains span residues 263–354 (LKTG…IRDG) and 360–465 (ELTV…LRQG).

This sequence belongs to the peptidase S1C family.

The protein resides in the periplasm. It carries out the reaction Acts on substrates that are at least partially unfolded. The cleavage site P1 residue is normally between a pair of hydrophobic residues, such as Val-|-Val.. Its function is as follows. Might be efficient in the degradation of transiently denatured and unfolded proteins which accumulate in the periplasm following stress conditions. This Pseudomonas fluorescens (strain ATCC BAA-477 / NRRL B-23932 / Pf-5) protein is Probable periplasmic serine endoprotease DegP-like (mucD).